A 449-amino-acid chain; its full sequence is Elongation factor 1-alpha (449 aa).

In terms of domain architecture, tr-type G spans 5-230; sequence KVHINIVVIG…DQINEPKRPS (226 aa). Residues 14 to 21 form a G1 region; the sequence is GHVDSGKS. 14–21 is a GTP binding site; that stretch reads GHVDSGKS. N6,N6-dimethyllysine is present on Lys55. A G2 region spans residues 70 to 74; that stretch reads GITID. Lys79 is subject to N6,N6,N6-trimethyllysine. The interval 91 to 94 is G3; that stretch reads DAPG. Residues 91 to 95 and 153 to 156 each bind GTP; these read DAPGH and NKMD. The segment at 153–156 is G4; it reads NKMD. Lys187 is subject to N6,N6,N6-trimethyllysine. Residues 194–196 are G5; sequence SGF. Lys261 bears the N6-methyllysine mark. Residue Glu289 is modified to 5-glutamyl glycerylphosphorylethanolamine. Lys306 is modified (N6,N6,N6-trimethyllysine). 5-glutamyl glycerylphosphorylethanolamine is present on Glu362. An N6,N6,N6-trimethyllysine modification is found at Lys396.

The protein belongs to the TRAFAC class translation factor GTPase superfamily. Classic translation factor GTPase family. EF-Tu/EF-1A subfamily.

The protein resides in the cytoplasm. Functionally, this protein promotes the GTP-dependent binding of aminoacyl-tRNA to the A-site of ribosomes during protein biosynthesis. The sequence is that of Elongation factor 1-alpha from Daucus carota (Wild carrot).